The sequence spans 152 residues: MTVTDLVLVLFIVALLAYAIYDQFIMPRRNGPTLLAVPLLRRGRVDSVIFVGLVAILIYNNVTSHGAQITTWLLCALALMGFYIFWVRAPRIIFKQKGFFFANVWIEYNRIKEMNLSEDGVLVMQLEQRRLLIRVRNIDDLERIYKLLVSSQ.

3 consecutive transmembrane segments (helical) span residues 6–26, 45–65, and 67–87; these read LVLV…QFIM, VDSV…VTSH, and AQIT…IFWV.

It belongs to the UPF0266 family.

It localises to the cell inner membrane. This Citrobacter koseri (strain ATCC BAA-895 / CDC 4225-83 / SGSC4696) protein is UPF0266 membrane protein CKO_01158.